The sequence spans 484 residues: Calcium-dependent protein kinase 26 (484 aa).

The region spanning 24–282 is the Protein kinase domain; that stretch reads YSLGHKLGQG…AHQVLRHPWI (259 aa). Residues 30-38 and Lys-53 contribute to the ATP site; that span reads LGQGQFGTT. Asp-148 serves as the catalytic Proton acceptor. Ser-188 carries the phosphoserine modification. The interval 288–318 is autoinhibitory domain; sequence APDRALDPAVLSRLKQFSAMNKLKQMALRVI. EF-hand domains follow at residues 325–360, 361–396, 397–432, and 436–466; these read EEIA…YGST, LKDT…LNKL, EREE…QGMS, and LEDV…GIVG. Ca(2+) contacts are provided by Asp-338, Asp-340, Ser-342, Glu-349, Asp-374, Asp-376, Ser-378, Thr-380, Glu-385, Asp-410, Asp-412, Ser-414, Tyr-416, Glu-421, Asp-444, Asp-446, Asp-448, Arg-450, and Glu-455.

Belongs to the protein kinase superfamily. Ser/Thr protein kinase family. CDPK subfamily.

The enzyme catalyses L-seryl-[protein] + ATP = O-phospho-L-seryl-[protein] + ADP + H(+). The catalysed reaction is L-threonyl-[protein] + ATP = O-phospho-L-threonyl-[protein] + ADP + H(+). Its activity is regulated as follows. Activated by calcium. Autophosphorylation may play an important role in the regulation of the kinase activity. Its function is as follows. May play a role in signal transduction pathways that involve calcium as a second messenger. The sequence is that of Calcium-dependent protein kinase 26 (CPK26) from Arabidopsis thaliana (Mouse-ear cress).